Here is a 154-residue protein sequence, read N- to C-terminus: Large ribosomal subunit protein uL13 (154 aa).

Belongs to the universal ribosomal protein uL13 family. Part of the 50S ribosomal subunit.

Its function is as follows. This protein is one of the early assembly proteins of the 50S ribosomal subunit, although it is not seen to bind rRNA by itself. It is important during the early stages of 50S assembly. The sequence is that of Large ribosomal subunit protein uL13 from Rhizobium johnstonii (strain DSM 114642 / LMG 32736 / 3841) (Rhizobium leguminosarum bv. viciae).